An 86-amino-acid polypeptide reads, in one-letter code: Apolipoprotein C-I (86 aa).

Positions 1-26 are cleaved as a signal peptide; the sequence is MRLFLSLPVLVVALLMILEGPGPAQG.

This sequence belongs to the apolipoprotein C1 family.

It localises to the secreted. Its function is as follows. Inhibitor of lipoprotein binding to the low density lipoprotein (LDL) receptor, LDL receptor-related protein, and very low density lipoprotein (VLDL) receptor. Associates with high density lipoproteins (HDL) and the triacylglycerol-rich lipoproteins in the plasma and makes up about 10% of the protein of the VLDL and 2% of that of HDL. Appears to interfere directly with fatty acid uptake and is also the major plasma inhibitor of cholesteryl ester transfer protein (CETP). Binds free fatty acids and reduces their intracellular esterification. Modulates the interaction of APOE with beta-migrating VLDL and inhibits binding of beta-VLDL to the LDL receptor-related protein. The polypeptide is Apolipoprotein C-I (APOC1) (Aotus nancymaae (Ma's night monkey)).